The sequence spans 266 residues: Exosome complex component Rrp42 (266 aa).

It belongs to the RNase PH family. Rrp42 subfamily. In terms of assembly, component of the archaeal exosome complex. Forms a hexameric ring-like arrangement composed of 3 Rrp41-Rrp42 heterodimers. The hexameric ring associates with a trimer of Rrp4 and/or Csl4 subunits.

The protein localises to the cytoplasm. In terms of biological role, non-catalytic component of the exosome, which is a complex involved in RNA degradation. Contributes to the structuring of the Rrp41 active site. This is Exosome complex component Rrp42 from Methanosarcina acetivorans (strain ATCC 35395 / DSM 2834 / JCM 12185 / C2A).